We begin with the raw amino-acid sequence, 82 residues long: Diptericin-A (82 aa).

Disordered stretches follow at residues D1 to G32 and D45 to R69. The residue at position 82 (F82) is a Phenylalanine amide.

Belongs to the attacin/sarcotoxin-2 family.

Its subcellular location is the secreted. In terms of biological role, antimicrobial peptide required to resist Gram-negative bacterial infections, regulated by Dredd. This is Diptericin-A from Protophormia terraenovae (Northern blowfly).